The following is a 161-amino-acid chain: Putative 4-hydroxy-4-methyl-2-oxoglutarate aldolase (161 aa).

Residues 75-78 (GDML) and Arg97 each bind substrate. An a divalent metal cation-binding site is contributed by Asp98.

This sequence belongs to the class II aldolase/RraA-like family. Homotrimer. Requires a divalent metal cation as cofactor.

It catalyses the reaction 4-hydroxy-4-methyl-2-oxoglutarate = 2 pyruvate. The catalysed reaction is oxaloacetate + H(+) = pyruvate + CO2. Catalyzes the aldol cleavage of 4-hydroxy-4-methyl-2-oxoglutarate (HMG) into 2 molecules of pyruvate. Also contains a secondary oxaloacetate (OAA) decarboxylase activity due to the common pyruvate enolate transition state formed following C-C bond cleavage in the retro-aldol and decarboxylation reactions. The sequence is that of Putative 4-hydroxy-4-methyl-2-oxoglutarate aldolase from Marinomonas sp. (strain MWYL1).